The following is a 449-amino-acid chain: Bifunctional protein GlmU (449 aa).

The pyrophosphorylase stretch occupies residues 1-226; sequence MVAVAILAAG…FQEISGINDR (226 aa). UDP-N-acetyl-alpha-D-glucosamine is bound by residues 7–10, Lys21, Gln73, and 78–79; these read LAAG and GT. Position 103 (Asp103) interacts with Mg(2+). Gly140, Glu155, Asn170, and Asn224 together coordinate UDP-N-acetyl-alpha-D-glucosamine. Residue Asn224 coordinates Mg(2+). Residues 227–247 form a linker region; that stretch reads FQLSAAYEILQDRIKEKWMKA. Residues 248–449 are N-acetyltransferase; sequence GVMIHQPDTV…KEIKGWRLQS (202 aa). UDP-N-acetyl-alpha-D-glucosamine-binding residues include Arg329 and Lys347. Catalysis depends on His359, which acts as the Proton acceptor. UDP-N-acetyl-alpha-D-glucosamine is bound by residues Tyr362 and Asn373. Acetyl-CoA is bound by residues Ala376, 382 to 383, Ala419, and Arg436; that span reads NY.

This sequence in the N-terminal section; belongs to the N-acetylglucosamine-1-phosphate uridyltransferase family. The protein in the C-terminal section; belongs to the transferase hexapeptide repeat family. As to quaternary structure, homotrimer. Mg(2+) is required as a cofactor.

It is found in the cytoplasm. It catalyses the reaction alpha-D-glucosamine 1-phosphate + acetyl-CoA = N-acetyl-alpha-D-glucosamine 1-phosphate + CoA + H(+). The catalysed reaction is N-acetyl-alpha-D-glucosamine 1-phosphate + UTP + H(+) = UDP-N-acetyl-alpha-D-glucosamine + diphosphate. It participates in nucleotide-sugar biosynthesis; UDP-N-acetyl-alpha-D-glucosamine biosynthesis; N-acetyl-alpha-D-glucosamine 1-phosphate from alpha-D-glucosamine 6-phosphate (route II): step 2/2. It functions in the pathway nucleotide-sugar biosynthesis; UDP-N-acetyl-alpha-D-glucosamine biosynthesis; UDP-N-acetyl-alpha-D-glucosamine from N-acetyl-alpha-D-glucosamine 1-phosphate: step 1/1. Its pathway is bacterial outer membrane biogenesis; LPS lipid A biosynthesis. Functionally, catalyzes the last two sequential reactions in the de novo biosynthetic pathway for UDP-N-acetylglucosamine (UDP-GlcNAc). The C-terminal domain catalyzes the transfer of acetyl group from acetyl coenzyme A to glucosamine-1-phosphate (GlcN-1-P) to produce N-acetylglucosamine-1-phosphate (GlcNAc-1-P), which is converted into UDP-GlcNAc by the transfer of uridine 5-monophosphate (from uridine 5-triphosphate), a reaction catalyzed by the N-terminal domain. The protein is Bifunctional protein GlmU of Picosynechococcus sp. (strain ATCC 27264 / PCC 7002 / PR-6) (Agmenellum quadruplicatum).